Consider the following 315-residue polypeptide: Pantothenate kinase (315 aa).

94 to 101 (GSVAVGKS) contributes to the ATP binding site.

It belongs to the prokaryotic pantothenate kinase family.

The protein resides in the cytoplasm. The enzyme catalyses (R)-pantothenate + ATP = (R)-4'-phosphopantothenate + ADP + H(+). Its pathway is cofactor biosynthesis; coenzyme A biosynthesis; CoA from (R)-pantothenate: step 1/5. The chain is Pantothenate kinase from Citrobacter koseri (strain ATCC BAA-895 / CDC 4225-83 / SGSC4696).